The following is a 406-amino-acid chain: RILP-like protein 1 (406 aa).

Position 7 is a phosphoserine (Ser-7). Residues 10-97 enclose the RH1 domain; that stretch reads AALSALEKNV…RVERMDRIEK (88 aa). An S-nitrosocysteine modification is found at Cys-47. Positions 76–258 form a coiled coil; that stretch reads ELDELRLELD…KLRERLQGEH (183 aa). 2 disordered regions span residues 255–280 and 330–354; these read QGEH…ESIS and EIEE…QPES. Ser-259 carries the post-translational modification Phosphoserine. Over residues 262–280 the composition is skewed to acidic residues; it reads GEEEEAEIQPQPDGEESIS. In terms of domain architecture, RH2 spans 294–359; that stretch reads RPRFTLQELR…PQPESGIKRL (66 aa).

This sequence belongs to the RILPL family. As to quaternary structure, interacts (when S-nitrosylated) with GAPDH. Interacts with RAB8A; interaction is dependent on the phosphorylation of 'Thr-72' of RAB8A. Interacts with RAB10 and RAB12; the interaction is dependent on the phosphorylation of 'Thr-73' of RAB10, and 'Ser-105' of RAB12. In terms of processing, S-nitrosylation is required for the interaction with GAPDH.

The protein localises to the cytoplasm. It localises to the cytosol. It is found in the cell projection. The protein resides in the cilium. Its subcellular location is the cytoskeleton. The protein localises to the microtubule organizing center. It localises to the centrosome. It is found in the centriole. Its function is as follows. Neuroprotective protein, which acts by sequestring GAPDH in the cytosol and prevent the apoptotic function of GAPDH in the nucleus. Competes with SIAH1 for binding GAPDH. Does not regulate lysosomal morphology and distribution. Plays a role in the regulation of cell shape and polarity. Plays a role in cellular protein transport, including protein transport away from primary cilia. Binds to RAB10 following LRRK2-mediated RAB10 phosphorylation which leads to inhibition of ciliogenesis. This chain is RILP-like protein 1 (Rilpl1), found in Mus musculus (Mouse).